A 188-amino-acid chain; its full sequence is Kappa-casein (188 aa).

The signal sequence occupies residues 1–21 (MMKSSFLIVPILALTLPFLGA). Residues Thr-143 and Thr-148 are each glycosylated (O-linked (GalNAc...) threonine). The residue at position 163 (Thr-163) is a Phosphothreonine. Ser-167 is modified (phosphoserine; alternate). Ser-167 carries O-linked (GalNAc...) serine; alternate glycosylation. Residue Thr-184 is glycosylated (O-linked (GalNAc...) threonine). At Ser-185 the chain carries Phosphoserine.

Belongs to the kappa-casein family. In terms of tissue distribution, mammary gland specific. Secreted in milk.

It localises to the secreted. Functionally, kappa-casein stabilizes micelle formation, preventing casein precipitation in milk. The chain is Kappa-casein (CSN3) from Sus scrofa (Pig).